Consider the following 570-residue polypeptide: 2-succinyl-5-enolpyruvyl-6-hydroxy-3-cyclohexene-1-carboxylate synthase (570 aa).

Belongs to the TPP enzyme family. MenD subfamily. Homodimer. Requires Mg(2+) as cofactor. Mn(2+) serves as cofactor. Thiamine diphosphate is required as a cofactor.

It carries out the reaction isochorismate + 2-oxoglutarate + H(+) = 5-enolpyruvoyl-6-hydroxy-2-succinyl-cyclohex-3-ene-1-carboxylate + CO2. It participates in quinol/quinone metabolism; 1,4-dihydroxy-2-naphthoate biosynthesis; 1,4-dihydroxy-2-naphthoate from chorismate: step 2/7. Its pathway is quinol/quinone metabolism; menaquinone biosynthesis. In terms of biological role, catalyzes the thiamine diphosphate-dependent decarboxylation of 2-oxoglutarate and the subsequent addition of the resulting succinic semialdehyde-thiamine pyrophosphate anion to isochorismate to yield 2-succinyl-5-enolpyruvyl-6-hydroxy-3-cyclohexene-1-carboxylate (SEPHCHC). This chain is 2-succinyl-5-enolpyruvyl-6-hydroxy-3-cyclohexene-1-carboxylate synthase, found in Vibrio cholerae serotype O1 (strain ATCC 39541 / Classical Ogawa 395 / O395).